A 275-amino-acid chain; its full sequence is 4-hydroxy-3-methylbut-2-enyl diphosphate reductase (275 aa).

Cysteine 12 is a binding site for [4Fe-4S] cluster. Positions 36 and 70 each coordinate (2E)-4-hydroxy-3-methylbut-2-enyl diphosphate. Histidine 36 and histidine 70 together coordinate dimethylallyl diphosphate. Residues histidine 36 and histidine 70 each contribute to the isopentenyl diphosphate site. Residue cysteine 92 coordinates [4Fe-4S] cluster. Residue histidine 120 coordinates (2E)-4-hydroxy-3-methylbut-2-enyl diphosphate. Position 120 (histidine 120) interacts with dimethylallyl diphosphate. Residue histidine 120 coordinates isopentenyl diphosphate. Residue glutamate 122 is the Proton donor of the active site. Residue threonine 158 coordinates (2E)-4-hydroxy-3-methylbut-2-enyl diphosphate. Cysteine 186 provides a ligand contact to [4Fe-4S] cluster. (2E)-4-hydroxy-3-methylbut-2-enyl diphosphate-binding residues include serine 214, serine 215, asparagine 216, and serine 258. The dimethylallyl diphosphate site is built by serine 214, serine 215, asparagine 216, and serine 258. 4 residues coordinate isopentenyl diphosphate: serine 214, serine 215, asparagine 216, and serine 258.

The protein belongs to the IspH family. It depends on [4Fe-4S] cluster as a cofactor.

It catalyses the reaction isopentenyl diphosphate + 2 oxidized [2Fe-2S]-[ferredoxin] + H2O = (2E)-4-hydroxy-3-methylbut-2-enyl diphosphate + 2 reduced [2Fe-2S]-[ferredoxin] + 2 H(+). The catalysed reaction is dimethylallyl diphosphate + 2 oxidized [2Fe-2S]-[ferredoxin] + H2O = (2E)-4-hydroxy-3-methylbut-2-enyl diphosphate + 2 reduced [2Fe-2S]-[ferredoxin] + 2 H(+). Its pathway is isoprenoid biosynthesis; dimethylallyl diphosphate biosynthesis; dimethylallyl diphosphate from (2E)-4-hydroxy-3-methylbutenyl diphosphate: step 1/1. It participates in isoprenoid biosynthesis; isopentenyl diphosphate biosynthesis via DXP pathway; isopentenyl diphosphate from 1-deoxy-D-xylulose 5-phosphate: step 6/6. Functionally, catalyzes the conversion of 1-hydroxy-2-methyl-2-(E)-butenyl 4-diphosphate (HMBPP) into a mixture of isopentenyl diphosphate (IPP) and dimethylallyl diphosphate (DMAPP). Acts in the terminal step of the DOXP/MEP pathway for isoprenoid precursor biosynthesis. This Sulfurimonas denitrificans (strain ATCC 33889 / DSM 1251) (Thiomicrospira denitrificans (strain ATCC 33889 / DSM 1251)) protein is 4-hydroxy-3-methylbut-2-enyl diphosphate reductase.